The following is a 78-amino-acid chain: Omega-conotoxin-like 12 (78 aa).

Residues 1–22 (MKLTCVVIVAVLLLTACQLITA) form the signal peptide. Positions 23–42 (DDSRGTQKHRSLRSTTKVSK) are excised as a propeptide. Disulfide bonds link C46–C62, C53–C65, and C61–C72.

The protein belongs to the conotoxin O1 superfamily. Expressed by the venom duct.

It localises to the secreted. In terms of biological role, omega-conotoxins act at presynaptic membranes, they bind and block voltage-gated calcium channels (Cav). This is Omega-conotoxin-like 12 from Conus striatus (Striated cone).